A 288-amino-acid polypeptide reads, in one-letter code: Pteridine reductase 1 (288 aa).

17–40 (RLGRSIAEGLHAEGYAVCLHYHRS) is an NADP(+) binding site. Ser-175 contacts substrate. The Proton acceptor role is filled by Tyr-194.

This sequence belongs to the short-chain dehydrogenases/reductases (SDR) family. Homotetramer.

It carries out the reaction (6R)-L-erythro-5,6,7,8-tetrahydrobiopterin + 2 NADP(+) = L-erythro-biopterin + 2 NADPH + 2 H(+). It participates in cofactor biosynthesis; tetrahydrobiopterin biosynthesis; tetrahydrobiopterin from biopterin: step 1/1. Functionally, exhibits a NADPH-dependent biopterin reductase activity. Has good activity with folate and significant activity with dihydrofolate and dihydrobiopterin, but not with quinonoid dihydrobiopterin. Confers resistance to methotrexate (MTX). This chain is Pteridine reductase 1 (PTR1), found in Leishmania major.